The chain runs to 407 residues: uncharacterized protein (407 aa).

This is an uncharacterized protein from Mycobacterium tuberculosis (strain CDC 1551 / Oshkosh).